Consider the following 1505-residue polypeptide: G patch domain-containing protein 8 (1505 aa).

Residues 40–86 enclose the G-patch domain; it reads SDNIGHRLLQKHGWKLGQGLGKSLQGRTDPIPIVVKYDVMGMGRMEM. A coiled-coil region spans residues 89–124; that stretch reads DYAEDATERRRVLEVEKEDTEELRQKYKDYVDKEKA. The C2H2-type zinc finger occupies 136–160; it reads FYCELCDKQYQKHQEFDNHINSYDH. Composition is skewed to basic and acidic residues over residues 166–175 and 182–206; these read LKDLKQREFA and SRKD…RKQA. The tract at residues 166–244 is disordered; sequence LKDLKQREFA…SSTNSGASAV (79 aa). Positions 223–233 are enriched in acidic residues; it reads VDEDGGEEDKD. A Glycyl lysine isopeptide (Lys-Gly) (interchain with G-Cter in SUMO2) cross-link involves residue K311. 2 stretches are compositionally biased toward basic and acidic residues: residues 322-339 and 421-436; these read HAEE…EKSS and EGDH…ENRK. Disordered stretches follow at residues 322–393 and 419–537; these read HAEE…EPEY and QMEG…FPVL. The span at 437-449 shows a compositional bias: polar residues; the sequence is SSSPKPQGCSKTA. K479 carries the N6-acetyllysine modification. K573 participates in a covalent cross-link: Glycyl lysine isopeptide (Lys-Gly) (interchain with G-Cter in SUMO2). Basic and acidic residues-rich tracts occupy residues 575–612 and 648–665; these read SRNK…KSQE and SETE…EPSG. A disordered region spans residues 575–1304; sequence SRNKDAKAKG…ESTDGTEDAS (730 aa). A Phosphoserine modification is found at S648. A compositionally biased stretch (basic residues) spans 666 to 687; the sequence is KSHRHKKKKKHKKSSKHKRKHK. The span at 688–702 shows a compositional bias: basic and acidic residues; sequence ADTEEKSSKAESGEK. A compositionally biased stretch (basic residues) spans 703–715; the sequence is SKKRKKRKRKKNK. 3 positions are modified to phosphoserine: S733, S735, and S753. The segment covering 745 to 767 has biased composition (basic and acidic residues); that stretch reads AQDDSQRRSLPAEEGNSGKKDDG. Over residues 794–804 the composition is skewed to basic residues; sequence ANTKHSSRSSH. Residues 832-849 are compositionally biased toward acidic residues; that stretch reads SEEEEEEEEEEEEEDEDS. Residues 856–871 are compositionally biased toward basic residues; it reads SRSRSGHRHSSHRSSR. The segment covering 872–900 has biased composition (low complexity); it reads RSYSSSSDASSDQSCYSRQHSYSDDSYSD. Phosphoserine is present on residues S915 and S918. A compositionally biased stretch (basic residues) spans 923 to 932; that stretch reads SKHRSKRHKY. S985, S1013, S1018, S1037, and S1039 each carry phosphoserine. The segment covering 1017 to 1031 has biased composition (basic and acidic residues); that stretch reads ESPEERRSGRRDFIR. Basic and acidic residues predominate over residues 1050 to 1063; it reads GPGKKEDGRGDDSK. The residue at position 1085 (S1085) is a Phosphoserine. Basic and acidic residues-rich tracts occupy residues 1097–1112, 1163–1185, and 1211–1220; these read LLEK…KPNV, KKCE…EEGS, and EEPKSEEATA. A Glycyl lysine isopeptide (Lys-Gly) (interchain with G-Cter in SUMO2) cross-link involves residue K1109. Phosphoserine is present on S1179.

This is G patch domain-containing protein 8 (Gpatch8) from Mus musculus (Mouse).